Reading from the N-terminus, the 243-residue chain is tRNA (guanine-N(1)-)-methyltransferase (243 aa).

S-adenosyl-L-methionine is bound by residues G108 and 127-132 (LGDFVL).

Belongs to the RNA methyltransferase TrmD family. In terms of assembly, homodimer.

The protein localises to the cytoplasm. The enzyme catalyses guanosine(37) in tRNA + S-adenosyl-L-methionine = N(1)-methylguanosine(37) in tRNA + S-adenosyl-L-homocysteine + H(+). Specifically methylates guanosine-37 in various tRNAs. The protein is tRNA (guanine-N(1)-)-methyltransferase of Streptococcus pyogenes serotype M2 (strain MGAS10270).